The primary structure comprises 360 residues: Nucleoporin SEH1 (360 aa).

6 WD repeats span residues 10 to 49 (DHKD…EWHC), 55 to 96 (THSG…SNDK), 111 to 152 (DSRT…NLSQ), 160 to 210 (SCKL…RKYA), 217 to 258 (TVTD…KELT), and 276 to 315 (NHNS…NWKC). K12 is covalently cross-linked (Glycyl lysine isopeptide (Lys-Gly) (interchain with G-Cter in SUMO2)). Residue S190 is modified to Phosphoserine. The segment covering 324 to 342 (SPVNGSSQQGNSNPSVGSN) has biased composition (low complexity). The interval 324–360 (SPVNGSSQQGNSNPSVGSNIPSLQNSLNGSSAGRKHS) is disordered. Over residues 343–354 (IPSLQNSLNGSS) the composition is skewed to polar residues.

Belongs to the WD repeat SEC13 family. As to quaternary structure, component of the Nup107-160 subcomplex of the nuclear pore complex (NPC). The Nup107-160 subcomplex includes NUP160, NUP133, NUP107, NUP98, NUP85, NUP43, NUP37, SEH1 and SEC13. The SEH1 subunit appears to be only weakly associated with the Nup107-160 subcomplex. Component of the GATOR2 subcomplex, composed of MIOS, SEC13, SEH1L, WDR24 and WDR59. The GATOR2 complex interacts with CASTOR1 and CASTOR2; the interaction is negatively regulated by arginine. The GATOR2 complex interacts with SESN1, SESN2 and SESN3; the interaction is negatively regulated by amino acids. SESN1, SESN2 and SESN3 convey leucine availability via direct interaction with SEH1L and WDR24.

It is found in the chromosome. Its subcellular location is the centromere. The protein resides in the kinetochore. The protein localises to the nucleus. It localises to the nuclear pore complex. It is found in the lysosome membrane. The GATOR2 complex is negatively regulated by the upstream amino acid sensors CASTOR1 and SESN2, which sequester the GATOR2 complex in absence of amino acids. In the presence of abundant amino acids, GATOR2 is released from CASTOR1 and SESN2 and activated. Its function is as follows. Component of the Nup107-160 subcomplex of the nuclear pore complex (NPC). The Nup107-160 subcomplex is required for the assembly of a functional NPC. The Nup107-160 subcomplex is also required for normal kinetochore microtubule attachment, mitotic progression and chromosome segregation. This subunit plays a role in recruitment of the Nup107-160 subcomplex to the kinetochore. In terms of biological role, as a component of the GATOR2 complex, functions as an activator of the amino acid-sensing branch of the mTORC1 signaling pathway. The GATOR2 complex indirectly activates mTORC1 through the inhibition of the GATOR1 subcomplex. GATOR2 probably acts as an E3 ubiquitin-protein ligase toward GATOR1. In the presence of abundant amino acids, the GATOR2 complex mediates ubiquitination of the NPRL2 core component of the GATOR1 complex, leading to GATOR1 inactivation. In the absence of amino acids, GATOR2 is inhibited, activating the GATOR1 complex. Within the GATOR2 complex, SEC13 and SEH1L are required to stabilize the complex. This is Nucleoporin SEH1 (SEH1L) from Bos taurus (Bovine).